The chain runs to 181 residues: tRNA-splicing endonuclease (181 aa).

Residues Tyr118, His126, and Lys157 contribute to the active site.

Belongs to the tRNA-intron endonuclease family. Archaeal short subfamily. In terms of assembly, homotetramer; although the tetramer contains four active sites, only two participate in the cleavage. Therefore, it should be considered as a dimer of dimers.

It carries out the reaction pretRNA = a 3'-half-tRNA molecule with a 5'-OH end + a 5'-half-tRNA molecule with a 2',3'-cyclic phosphate end + an intron with a 2',3'-cyclic phosphate and a 5'-hydroxyl terminus.. Functionally, endonuclease that removes tRNA introns. Cleaves pre-tRNA at the 5'- and 3'-splice sites to release the intron. The products are an intron and two tRNA half-molecules bearing 2',3' cyclic phosphate and 5'-OH termini. Recognizes a pseudosymmetric substrate in which 2 bulged loops of 3 bases are separated by a stem of 4 bp. In Hyperthermus butylicus (strain DSM 5456 / JCM 9403 / PLM1-5), this protein is tRNA-splicing endonuclease.